A 293-amino-acid polypeptide reads, in one-letter code: Pyridoxal 5'-phosphate synthase subunit PdxS (293 aa).

Asp23 contributes to the D-ribose 5-phosphate binding site. Catalysis depends on Lys80, which acts as the Schiff-base intermediate with D-ribose 5-phosphate. Gly152 contributes to the D-ribose 5-phosphate binding site. Arg164 lines the D-glyceraldehyde 3-phosphate pocket. D-ribose 5-phosphate is bound by residues Gly213 and 234–235 (GS).

It belongs to the PdxS/SNZ family. In terms of assembly, in the presence of PdxT, forms a dodecamer of heterodimers.

The enzyme catalyses aldehydo-D-ribose 5-phosphate + D-glyceraldehyde 3-phosphate + L-glutamine = pyridoxal 5'-phosphate + L-glutamate + phosphate + 3 H2O + H(+). It participates in cofactor biosynthesis; pyridoxal 5'-phosphate biosynthesis. Its function is as follows. Catalyzes the formation of pyridoxal 5'-phosphate from ribose 5-phosphate (RBP), glyceraldehyde 3-phosphate (G3P) and ammonia. The ammonia is provided by the PdxT subunit. Can also use ribulose 5-phosphate and dihydroxyacetone phosphate as substrates, resulting from enzyme-catalyzed isomerization of RBP and G3P, respectively. The chain is Pyridoxal 5'-phosphate synthase subunit PdxS from Roseiflexus sp. (strain RS-1).